A 437-amino-acid chain; its full sequence is Serine hydroxymethyltransferase (437 aa).

(6S)-5,6,7,8-tetrahydrofolate contacts are provided by residues L130 and 134–136 (GHL). K239 carries the post-translational modification N6-(pyridoxal phosphate)lysine.

This sequence belongs to the SHMT family. In terms of assembly, homodimer. It depends on pyridoxal 5'-phosphate as a cofactor.

The protein resides in the cytoplasm. It catalyses the reaction (6R)-5,10-methylene-5,6,7,8-tetrahydrofolate + glycine + H2O = (6S)-5,6,7,8-tetrahydrofolate + L-serine. It participates in one-carbon metabolism; tetrahydrofolate interconversion. Its pathway is amino-acid biosynthesis; glycine biosynthesis; glycine from L-serine: step 1/1. Functionally, catalyzes the reversible interconversion of serine and glycine with tetrahydrofolate (THF) serving as the one-carbon carrier. This reaction serves as the major source of one-carbon groups required for the biosynthesis of purines, thymidylate, methionine, and other important biomolecules. Also exhibits THF-independent aldolase activity toward beta-hydroxyamino acids, producing glycine and aldehydes, via a retro-aldol mechanism. This is Serine hydroxymethyltransferase from Bartonella tribocorum (strain CIP 105476 / IBS 506).